A 1025-amino-acid polypeptide reads, in one-letter code: Leucyl-cystinyl aminopeptidase (1025 aa).

Position 1 is an N-acetylmethionine (Met1). The Cytoplasmic portion of the chain corresponds to Met1–Arg109. Residues Leu53–Leu54 carry the Dileucine internalization motif motif. Phosphotyrosine is present on Tyr70. Positions Leu76–Leu77 match the Dileucine internalization motif motif. Residues Ser80 and Ser91 each carry the phosphoserine modification. Residues Arg96 to Gly101 form a tankyrase binding region. Residues Thr110–Leu131 form a helical; Signal-anchor for type II membrane protein membrane-spanning segment. The Extracellular portion of the chain corresponds to Pro132–Leu1025. 5 N-linked (GlcNAc...) asparagine glycosylation sites follow: Asn145, Asn184, Asn215, Asn256, and Asn266. Glu295 contributes to the substrate binding site. N-linked (GlcNAc...) asparagine glycosylation is found at Asn368 and Asn374. A substrate-binding site is contributed by Gly428–Asn432. An N-linked (GlcNAc...) asparagine glycan is attached at Asn447. His464 is a binding site for Zn(2+). The active-site Proton acceptor is the Glu465. Residues His468 and Glu487 each contribute to the Zn(2+) site. 9 N-linked (GlcNAc...) asparagine glycosylation sites follow: Asn525, Asn578, Asn664, Asn682, Asn695, Asn758, Asn834, Asn850, and Asn989.

The protein belongs to the peptidase M1 family. In terms of assembly, homodimer. Binds tankyrases 1 and 2. The cofactor is Zn(2+).

The protein localises to the cell membrane. It is found in the endomembrane system. The enzyme catalyses Release of an N-terminal amino acid, Cys-|-Xaa-, in which the half-cystine residue is involved in a disulfide loop, notably in oxytocin or vasopressin. Hydrolysis rates on a range of aminoacyl arylamides exceed that for the cystinyl derivative, however.. Functionally, release of an N-terminal amino acid, cleave before cysteine, leucine as well as other amino acids. Degrades peptide hormones such as oxytocin, vasopressin and angiotensin III, and plays a role in maintaining homeostasis during pregnancy. May be involved in the inactivation of neuronal peptides in the brain. Cleaves Met-enkephalin and dynorphin. Binds angiotensin IV and may be the angiotensin IV receptor in the brain. The sequence is that of Leucyl-cystinyl aminopeptidase (Lnpep) from Mus musculus (Mouse).